We begin with the raw amino-acid sequence, 2163 residues long: Myosin-VIIa (2163 aa).

The Myosin motor domain occupies 58-728; that stretch reads QGVEDMISLG…HDLFLEQERD (671 aa). An ATP-binding site is contributed by 151–158; sequence GESGAGKT. 2 actin-binding regions span residues 607–629 and 707–721; these read LDSL…KPNE and QLGH…AHDL. 4 IQ domains span residues 731 to 753, 754 to 783, 800 to 822, and 823 to 852; these read LTRK…RFLR, MRQA…GYMR, LRGH…EYGL, and KMWA…EYRR. Residues 886–914 adopt a coiled-coil conformation; sequence RLNEIERKEIEQELEERRRVEVKKNIIND. Residues 937–958 form a disordered region; sequence PDSSSEAPTPHGGRETSVFNDL. In terms of domain architecture, MyTH4 1 spans 1003–1239; the sequence is YSRKPLKHPL…PSWLELQATK (237 aa). One can recognise an FERM 1 domain in the interval 1244-1554; it reads IMLPITFMDG…YFLEGLKKRS (311 aa). One can recognise an SH3 domain in the interval 1552-1621; sequence KRSKFVIALQ…PAEIVYVLPS (70 aa). The 149-residue stretch at 1697–1845 folds into the MyTH4 2 domain; sequence YSREPLKQPL…PHQVEVEAIQ (149 aa). One can recognise an FERM 2 domain in the interval 1851–2154; sequence IFHKVYFPDD…SYISLMLTNM (304 aa).

It belongs to the TRAFAC class myosin-kinesin ATPase superfamily. Myosin family. As to quaternary structure, homodimerizes in a two headed molecule through the formation of a coiled-coil rod.

The protein localises to the cytoplasm. Its function is as follows. Myosins are actin-based motor molecules with ATPase activity. Unconventional myosins serve in intracellular movements: can function in cells as a single-molecule cargo transporter. A very slow and high-duty-ratio motor, may be suitable for tension maintenance of actin filaments. Their highly divergent tails are presumed to bind to membranous compartments, which would be moved relative to actin filaments. Plays a key role in the formation of cellular projections and other actin-based functions required for embryonic and larval viability. Necessary for auditory transduction: plays a role in Johnston organ (JO) organization by functioning in scolopidial apical attachment and therefore to acoustic stimulus propagation from the antenna a2/a3 joint to transducing elements. This Aedes aegypti (Yellowfever mosquito) protein is Myosin-VIIa.